A 576-amino-acid polypeptide reads, in one-letter code: Adenine deaminase (576 aa).

This sequence belongs to the metallo-dependent hydrolases superfamily. Adenine deaminase family. The cofactor is Mn(2+).

It catalyses the reaction adenine + H2O + H(+) = hypoxanthine + NH4(+). The sequence is that of Adenine deaminase from Bacillus pumilus (strain SAFR-032).